The primary structure comprises 484 residues: Aspartyl/glutamyl-tRNA(Asn/Gln) amidotransferase subunit B (484 aa).

It belongs to the GatB/GatE family. GatB subfamily. As to quaternary structure, heterotrimer of A, B and C subunits.

It catalyses the reaction L-glutamyl-tRNA(Gln) + L-glutamine + ATP + H2O = L-glutaminyl-tRNA(Gln) + L-glutamate + ADP + phosphate + H(+). The catalysed reaction is L-aspartyl-tRNA(Asn) + L-glutamine + ATP + H2O = L-asparaginyl-tRNA(Asn) + L-glutamate + ADP + phosphate + 2 H(+). Allows the formation of correctly charged Asn-tRNA(Asn) or Gln-tRNA(Gln) through the transamidation of misacylated Asp-tRNA(Asn) or Glu-tRNA(Gln) in organisms which lack either or both of asparaginyl-tRNA or glutaminyl-tRNA synthetases. The reaction takes place in the presence of glutamine and ATP through an activated phospho-Asp-tRNA(Asn) or phospho-Glu-tRNA(Gln). The protein is Aspartyl/glutamyl-tRNA(Asn/Gln) amidotransferase subunit B of Dechloromonas aromatica (strain RCB).